A 111-amino-acid polypeptide reads, in one-letter code: Ribonuclease P protein component (111 aa).

Belongs to the RnpA family. Consists of a catalytic RNA component (M1 or rnpB) and a protein subunit.

The catalysed reaction is Endonucleolytic cleavage of RNA, removing 5'-extranucleotides from tRNA precursor.. RNaseP catalyzes the removal of the 5'-leader sequence from pre-tRNA to produce the mature 5'-terminus. It can also cleave other RNA substrates such as 4.5S RNA. The protein component plays an auxiliary but essential role in vivo by binding to the 5'-leader sequence and broadening the substrate specificity of the ribozyme. The protein is Ribonuclease P protein component of Borreliella afzelii (strain PKo) (Borrelia afzelii).